The sequence spans 321 residues: Peroxidase 4 (321 aa).

Residues 1–25 (MASSSFSIVVVALGVLALFAGSSSA) form the signal peptide. Gln-26 is modified (pyrrolidone carboxylic acid). Cystine bridges form between Cys-36-Cys-116, Cys-69-Cys-74, Cys-122-Cys-317, and Cys-201-Cys-226. Residue His-67 is the Proton acceptor of the active site. 5 residues coordinate Ca(2+): Asp-68, Val-71, Gly-73, Asp-75, and Ser-77. A substrate-binding site is contributed by Pro-164. His-194 is a binding site for heme b. Thr-195 provides a ligand contact to Ca(2+). The N-linked (GlcNAc...) asparagine glycan is linked to Asn-210. Ca(2+) is bound by residues Asp-241, Thr-244, and Asp-249.

The protein belongs to the peroxidase family. Classical plant (class III) peroxidase subfamily. It depends on heme b as a cofactor. Requires Ca(2+) as cofactor.

The protein resides in the secreted. It catalyses the reaction 2 a phenolic donor + H2O2 = 2 a phenolic radical donor + 2 H2O. In terms of biological role, removal of H(2)O(2), oxidation of toxic reductants, biosynthesis and degradation of lignin, suberization, auxin catabolism, response to environmental stresses such as wounding, pathogen attack and oxidative stress. These functions might be dependent on each isozyme/isoform in each plant tissue. This Vitis vinifera (Grape) protein is Peroxidase 4.